A 205-amino-acid chain; its full sequence is Thymidine kinase (205 aa).

ATP-binding positions include 9–16 (SAMNAGKS) and 87–90 (DECQ). Glu88 serves as the catalytic Proton acceptor. Zn(2+)-binding residues include Cys145, Cys147, Cys182, and His185.

This sequence belongs to the thymidine kinase family. As to quaternary structure, homotetramer.

It localises to the cytoplasm. The catalysed reaction is thymidine + ATP = dTMP + ADP + H(+). Its activity is regulated as follows. Allosteric enzyme which is feedback inhibited by dTTP and activated by a number of dNDP and dNTP. Its function is as follows. Phosphorylates both thymidine and deoxyuridine. This is Thymidine kinase from Escherichia coli O157:H7.